A 319-amino-acid chain; its full sequence is Biotin synthase (319 aa).

In terms of domain architecture, Radical SAM core spans 44–273; it reads IHGDGIDLCS…EAKIRLAGGR (230 aa). [4Fe-4S] cluster is bound by residues C62, C66, and C69. Residues S106, C138, C198, and R268 each contribute to the [2Fe-2S] cluster site.

It belongs to the radical SAM superfamily. Biotin synthase family. Homodimer. Requires [4Fe-4S] cluster as cofactor. The cofactor is [2Fe-2S] cluster.

The catalysed reaction is (4R,5S)-dethiobiotin + (sulfur carrier)-SH + 2 reduced [2Fe-2S]-[ferredoxin] + 2 S-adenosyl-L-methionine = (sulfur carrier)-H + biotin + 2 5'-deoxyadenosine + 2 L-methionine + 2 oxidized [2Fe-2S]-[ferredoxin]. The protein operates within cofactor biosynthesis; biotin biosynthesis; biotin from 7,8-diaminononanoate: step 2/2. Catalyzes the conversion of dethiobiotin (DTB) to biotin by the insertion of a sulfur atom into dethiobiotin via a radical-based mechanism. This chain is Biotin synthase, found in Clostridium perfringens (strain ATCC 13124 / DSM 756 / JCM 1290 / NCIMB 6125 / NCTC 8237 / Type A).